The following is a 422-amino-acid chain: Probable tRNA pseudouridine synthase D (422 aa).

D83 acts as the Nucleophile in catalysis. The TRUD domain maps to 164-386; the sequence is GFPNYFGSQR…AGGRRELLIK (223 aa).

This sequence belongs to the pseudouridine synthase TruD family.

The catalysed reaction is uridine(13) in tRNA = pseudouridine(13) in tRNA. Functionally, could be responsible for synthesis of pseudouridine from uracil-13 in transfer RNAs. The polypeptide is Probable tRNA pseudouridine synthase D (Thermococcus sibiricus (strain DSM 12597 / MM 739)).